A 464-amino-acid chain; its full sequence is Forkhead box protein N3 (464 aa).

Disordered regions lie at residues 1 to 53 (MGPI…EKGG) and 85 to 108 (PVQD…DAKQ). The span at 14–30 (TGISVSSQCYRSSTLSN) shows a compositional bias: polar residues. The segment at residues 113-209 (KPPYSFSCLI…QALKKTPYHP (97 aa)) is a DNA-binding region (fork-head). Disordered regions lie at residues 294–337 (MESE…SSSA) and 381–428 (LVES…MKEA). Residues 316–336 (SSAKSANKRSSSPSDSISSSS) show a composition bias toward low complexity. Over residues 389–401 (QHKKKQHLLKLRR) the composition is skewed to basic residues.

The protein resides in the nucleus. In terms of biological role, acts as a transcriptional repressor. May be involved in DNA damage-inducible cell cycle arrests (checkpoints). The protein is Forkhead box protein N3 of Xenopus tropicalis (Western clawed frog).